The sequence spans 517 residues: Crotonobetaine/carnitine--CoA ligase (517 aa).

This sequence belongs to the ATP-dependent AMP-binding enzyme family.

It carries out the reaction 4-(trimethylamino)butanoate + ATP + CoA = 4-(trimethylamino)butanoyl-CoA + AMP + diphosphate. The enzyme catalyses crotonobetaine + ATP + CoA = crotonobetainyl-CoA + AMP + diphosphate. The catalysed reaction is (R)-carnitine + ATP + CoA = (R)-carnitinyl-CoA + AMP + diphosphate. It functions in the pathway amine and polyamine metabolism; carnitine metabolism. Functionally, catalyzes the transfer of CoA to carnitine, generating the initial carnitinyl-CoA needed for the CaiB reaction cycle. Also has activity toward crotonobetaine and gamma-butyrobetaine. In Shigella dysenteriae serotype 1 (strain Sd197), this protein is Crotonobetaine/carnitine--CoA ligase.